The chain runs to 82 residues: UPF0213 protein SH2523 (82 aa).

Residues 2–77 (AKHYVYIVKC…KTFSRQQKLK (76 aa)) enclose the GIY-YIG domain.

This sequence belongs to the UPF0213 family.

This Staphylococcus haemolyticus (strain JCSC1435) protein is UPF0213 protein SH2523.